Reading from the N-terminus, the 169-residue chain is Small ribosomal subunit protein uS9 (169 aa).

2 disordered regions span residues 1-29 and 128-169; these read MVEP…TETP and MDPE…YSKR. The span at 9 to 21 shows a compositional bias: acidic residues; the sequence is DVQEYDENSEEYP. Over residues 150-169 the composition is skewed to basic residues; sequence VERKKAGLKKARKAPQYSKR.

Belongs to the universal ribosomal protein uS9 family.

The protein is Small ribosomal subunit protein uS9 of Thermobifida fusca (strain YX).